A 252-amino-acid polypeptide reads, in one-letter code: Fatty acid elongase 4 (252 aa).

The chain crosses the membrane as a helical span at residues 25–45 (LVSWHALVLGHLLYLFVVFVM). A glycan (N-linked (GlcNAc...) asparagine) is linked at Asn-56. A helical transmembrane segment spans residues 60-80 (VLVVYNVLQICLSAAMAINLS). Residue Asn-89 is glycosylated (N-linked (GlcNAc...) asparagine). 5 consecutive transmembrane segments (helical) span residues 100–120 (FWMF…VFIL), 127–147 (QLSF…GILL), 150–170 (GLAN…HFLM), 187–207 (FLLT…AILV), and 214–234 (FTLG…VLFL). The short motif at 132-136 (HVYHH) is the HxxHH motif element. His-135 (nucleophile) is an active-site residue.

This sequence belongs to the ELO family.

It localises to the membrane. It carries out the reaction (5Z,8Z,11Z,14Z)-eicosatetraenoyl-CoA + malonyl-CoA + H(+) = (7Z,10Z,13Z,16Z)-3-oxodocosatetraenoyl-CoA + CO2 + CoA. It participates in lipid metabolism; fatty acid biosynthesis. Its function is as follows. Involved in the synthesis of fatty acids. Elongates arachidonate and other C20 polyunsaturated fatty acids (PUFAs) with a preference for n-6 PUFAs. Not involved in fatty acid synthesis up to C18. This chain is Fatty acid elongase 4, found in Trypanosoma brucei brucei (strain 927/4 GUTat10.1).